A 511-amino-acid polypeptide reads, in one-letter code: Fusicocca-1,10(14)-diene-8beta,16-diol C-9 hydroxylase (511 aa).

Residues 7–29 (TVAALAAVFVAGTLLSRLASWIR) traverse the membrane as a helical segment. Residues N64, N163, and N343 are each glycosylated (N-linked (GlcNAc...) asparagine). C450 lines the heme pocket.

This sequence belongs to the cytochrome P450 family. The cofactor is heme.

The protein localises to the membrane. Its pathway is mycotoxin biosynthesis. Functionally, cytochrome P450 monooxygenase; part of the 2 gene clusters that mediate the biosynthesis of fusicoccins, diterpene glucosides that display phytohormone-like activity and function as potent activators of plasma membrane H(+)-ATPases in plants by modifying 14-3-3 proteins and cause the plant disease constriction canker. The first step in the pathway is performed by the fusicoccadiene synthase PaFS that possesses both prenyl transferase and terpene cyclase activity, converting isopentenyl diphosphate and dimethylallyl diphosphate into geranylgeranyl diphosphate (GGDP) and successively converting GGDP into fusicocca-2,10(14)-diene, a precursor for fusicoccin H. The second step is the oxidation at the C-8 position by the cytochrome P450 monooxygenase PaP450-2 to yield fusicocca-2,10(14)-diene-8-beta-ol. The cytochrome P450 monooxygenase PaP450-1 then catalyzes the hydroxylation at the C-16 position to produce fusicocca-2,10(14)-diene-8-beta,16-diol. The dioxygenase fc-dox then catalyzes the 16-oxydation of fusicocca-2,10(14)-diene-8-beta,16-diol to yield an aldehyde (8-beta-hydroxyfusicocca-1,10(14)-dien-16-al). The short-chain dehydrogenase/reductase fc-sdr catalyzes the reduction of the aldehyde to yield fusicocca-1,10(14)-diene-8-beta,16-diol. The next step is the hydroxylation at C-9 performed by the cytochrome P450 monooxygenase PaP450-3 that leads to fusicoccin H aglycon which is glycosylated to fusicoccin H by the O-glycosyltransferase PaGT. Hydroxylation at C-12 by the cytochrome P450 monooxygenase PaP450-4 leads then to the production of fusicoccin Q and is followed by methylation by the O-methyltransferase PaMT to yield fusicoccin P. Fusicoccin P is further converted to fusicoccin J via prenylation by the O-glucose prenyltransferase PaPT. Cytochrome P450 monooxygenase PaP450-5 then performs hydroxylation at C-19 to yield dideacetyl-fusicoccin A which is acetylated to 3'-O-deacetyl-fusicoccin A by the O-acetyltransferase PaAT-2. Finally, a another acetylation by the O-acetyltransferase PaAT-1 yields fusicoccin A. This chain is Fusicocca-1,10(14)-diene-8beta,16-diol C-9 hydroxylase, found in Phomopsis amygdali (Fusicoccum amygdali).